A 359-amino-acid chain; its full sequence is CDP-glucose 4,6-dehydratase (359 aa).

This sequence belongs to the NAD(P)-dependent epimerase/dehydratase family. Requires NAD(+) as cofactor.

The enzyme catalyses CDP-D-glucose = CDP-4-dehydro-6-deoxy-D-glucose + H2O. The protein operates within nucleotide-sugar biosynthesis; CDP-3,6-dideoxy-D-mannose biosynthesis; CDP-3,6-dideoxy-D-mannose from CTP and alpha-D-glucose 1-phosphate: step 2/5. It participates in bacterial outer membrane biogenesis; LPS O-antigen biosynthesis. This is CDP-glucose 4,6-dehydratase (rfbG) from Salmonella typhimurium (strain LT2 / SGSC1412 / ATCC 700720).